A 212-amino-acid polypeptide reads, in one-letter code: Phosphatidylserine decarboxylase proenzyme (212 aa).

The active-site Schiff-base intermediate with substrate; via pyruvic acid is the Ser-182. Ser-182 is subject to Pyruvic acid (Ser); by autocatalysis.

It belongs to the phosphatidylserine decarboxylase family. PSD-A subfamily. As to quaternary structure, heterodimer of a large membrane-associated beta subunit and a small pyruvoyl-containing alpha subunit. Requires pyruvate as cofactor. Is synthesized initially as an inactive proenzyme. Formation of the active enzyme involves a self-maturation process in which the active site pyruvoyl group is generated from an internal serine residue via an autocatalytic post-translational modification. Two non-identical subunits are generated from the proenzyme in this reaction, and the pyruvate is formed at the N-terminus of the alpha chain, which is derived from the carboxyl end of the proenzyme. The post-translation cleavage follows an unusual pathway, termed non-hydrolytic serinolysis, in which the side chain hydroxyl group of the serine supplies its oxygen atom to form the C-terminus of the beta chain, while the remainder of the serine residue undergoes an oxidative deamination to produce ammonia and the pyruvoyl prosthetic group on the alpha chain.

The protein localises to the cell membrane. It carries out the reaction a 1,2-diacyl-sn-glycero-3-phospho-L-serine + H(+) = a 1,2-diacyl-sn-glycero-3-phosphoethanolamine + CO2. Its pathway is phospholipid metabolism; phosphatidylethanolamine biosynthesis; phosphatidylethanolamine from CDP-diacylglycerol: step 2/2. Catalyzes the formation of phosphatidylethanolamine (PtdEtn) from phosphatidylserine (PtdSer). The protein is Phosphatidylserine decarboxylase proenzyme of Chlorobium luteolum (strain DSM 273 / BCRC 81028 / 2530) (Pelodictyon luteolum).